A 351-amino-acid chain; its full sequence is Keratocan (351 aa).

Positions M1–T20 are cleaved as a signal peptide. The LRRNT domain occupies D34–S72. Disulfide bonds link C43–C49 and C47–C59. LRR repeat units follow at residues R73–N94, Q97–L118, K123–R143, S144–N165, N168–D181, N194–A214, N215–V236, K239–G259, S264–A283, and N284–P305. N94 is a glycosylation site (N-linked (GlcNAc...) (keratan sulfate) asparagine). N168 carries N-linked (GlcNAc...) (keratan sulfate) asparagine glycosylation. N-linked (GlcNAc...) asparagine glycosylation occurs at N223. N299 carries an N-linked (GlcNAc...) asparagine glycan. C304 and C342 form a disulfide bridge.

This sequence belongs to the small leucine-rich proteoglycan (SLRP) family. SLRP class II subfamily. In terms of processing, binds keratan sulfate chains. In terms of tissue distribution, selectively expressed in cornea of adult where it is detected in keratocytes but not in scleral cells. In embryo, first detected in periocular mesenchymal cells migrating toward developing cornea on 13.5 dpc; expression gradually restricted to corneal stromal cells on 14.5 to 18.5 dpc. Detected in scleral cells of 15.5 dpc but not in 18.5 dpc embryos.

The protein resides in the secreted. It is found in the extracellular space. It localises to the extracellular matrix. Its function is as follows. May be important in developing and maintaining corneal transparency and for the structure of the stromal matrix. This chain is Keratocan (Kera), found in Mus musculus (Mouse).